The sequence spans 156 residues: CKLF-like MARVEL transmembrane domain-containing protein 5 (156 aa).

An MARVEL domain is found at 29-146 (FLSSLKGILL…DAFKIYRTEL (118 aa)). 4 helical membrane passes run 35 to 55 (GILLETELALTFIIFICFTAS), 56 to 76 (ISAYMAAALLEFLITLAFLFL), 93 to 113 (LDFLRCLSAIVIFLVVSFAAV), and 119 to 139 (AAIAAFVFGIILVSVFAYDAF).

This sequence belongs to the chemokine-like factor family.

Its subcellular location is the membrane. In Mus musculus (Mouse), this protein is CKLF-like MARVEL transmembrane domain-containing protein 5 (Cmtm5).